The following is a 766-amino-acid chain: Serine/threonine-protein kinase DCLK2 (766 aa).

The interval 1-45 is disordered; the sequence is MASTRSIELEHFEERDKRPRPGSRRGAPSSSGGSSSSGPKGNGLI. Residues 7-19 are compositionally biased toward basic and acidic residues; it reads IELEHFEERDKRP. Over residues 24 to 39 the composition is skewed to low complexity; the sequence is RRGAPSSSGGSSSSGP. Thr-61 carries the post-translational modification Phosphothreonine. Doublecortin domains are found at residues 72–158 and 197–280; these read KKAR…VDYT and KLVT…AQDD. 2 stretches are compositionally biased toward low complexity: residues 300-312 and 324-347; these read AVKY…PGPS and TPSS…SPGS. The disordered stretch occupies residues 300-378; sequence AVKYSGSKSP…ELDRCISPEG (79 aa). A Phosphoserine modification is found at Ser-362. The Protein kinase domain maps to 394 to 651; that stretch reads YKIGKVIGDG…AGQILSHPWV (258 aa). Residues 400-408 and Lys-423 each bind ATP; that span reads IGDGNFAVV. The active-site Proton acceptor is the Asp-515. Ser-647 is modified (phosphoserine). Thr-666 carries the phosphothreonine modification. Residues 707–766 are disordered; that stretch reads CQDSGRPGMEPISPVPPSVEEIPVPGEAVPAPTPPESPTPHPPPAAPGGERAGTWRRHRD. The segment covering 724-736 has biased composition (low complexity); that stretch reads SVEEIPVPGEAVP. Residues 737–752 show a composition bias toward pro residues; that stretch reads APTPPESPTPHPPPAA.

This sequence belongs to the protein kinase superfamily. CAMK Ser/Thr protein kinase family. CaMK subfamily. In terms of assembly, binds to and stabilizes microtubules. Interacts with MAPK8IP1/JIP-1, MAPK8IP2/JIP-2, MAPK9/JNK2, PPP1R9B/NEURABIN-2 and actin. In terms of processing, autophosphorylated. Expressed in the brain, heart and eyes.

It is found in the cytoplasm. The protein resides in the cytoskeleton. It carries out the reaction L-seryl-[protein] + ATP = O-phospho-L-seryl-[protein] + ADP + H(+). The catalysed reaction is L-threonyl-[protein] + ATP = O-phospho-L-threonyl-[protein] + ADP + H(+). Protein kinase with a significantly reduced C(a2+)/CAM affinity and dependence compared to other members of the CaMK family. May play a role in the down-regulation of CRE-dependent gene activation probably by phosphorylation of the CREB coactivator CRTC2/TORC2 and the resulting retention of TORC2 in the cytoplasm. In Homo sapiens (Human), this protein is Serine/threonine-protein kinase DCLK2 (DCLK2).